We begin with the raw amino-acid sequence, 417 residues long: Fructose-1,6-bisphosphatase 1, chloroplastic (417 aa).

Residues 1 to 59 (MAATAATTTSSHLLLSSSRHVASSSQPSILSPRSLFSNNGKRAPTGVRNHQYASGVRCM) constitute a chloroplast transit peptide. Residues 24–35 (SSQPSILSPRSL) show a composition bias toward low complexity. Positions 24–48 (SSQPSILSPRSLFSNNGKRAPTGVR) are disordered. The residue at position 60 (A60) is an N-acetylalanine. 5 residues coordinate Mg(2+): E138, E167, D188, L190, and D191. Position 191 to 194 (191 to 194 (DGSS)) interacts with substrate. An intrachain disulfide couples C233 to C238. Substrate is bound by residues N297, Y329, Y347, Y349, and K359. Position 365 (E365) interacts with Mg(2+).

The protein belongs to the FBPase class 1 family. As to quaternary structure, homotetramer. The cofactor is Mg(2+).

The protein resides in the plastid. Its subcellular location is the chloroplast stroma. The catalysed reaction is beta-D-fructose 1,6-bisphosphate + H2O = beta-D-fructose 6-phosphate + phosphate. Its pathway is carbohydrate biosynthesis; Calvin cycle. Functionally, catalyzes the irreversible reaction from fructose-1,6-bisphosphate to fructose-6-phosphate and inorganic phosphate, to regenerate the primary CO(2) acceptor molecule, ribulose-1,5-bisphosphate. Involved in the regulation of photosynthetic electron flow and sucrose synthesis. Its activity is critical for normal plant development and important for the regulation of a wide range of metabolic processes. The protein is Fructose-1,6-bisphosphatase 1, chloroplastic of Arabidopsis thaliana (Mouse-ear cress).